The primary structure comprises 40 residues: uncharacterized protein (40 aa).

The chain crosses the membrane as a helical span at residues 20–37 (TYLYWTAVTAAYLTYLTI).

The protein resides in the membrane. This is an uncharacterized protein from Archaeoglobus fulgidus (strain ATCC 49558 / DSM 4304 / JCM 9628 / NBRC 100126 / VC-16).